A 559-amino-acid polypeptide reads, in one-letter code: Hepatocyte nuclear factor 1-beta (559 aa).

Positions 1–31 (MVSKLTSLQQELLSALLSSGVTKEVLVQALE) are dimerization. The 32-residue stretch at 1–32 (MVSKLTSLQQELLSALLSSGVTKEVLVQALEE) folds into the HNF-p1 domain. A phosphoserine mark is found at Ser49, Ser52, Ser75, and Ser80. A POU-specific atypical domain is found at 93-188 (KELQALNTEE…ILRQFNQTVQ (96 aa)). The homeobox; HNF1-type DNA-binding region spans 231 to 312 (MRRNRFKWGP…RRKEEEAFRQ (82 aa)). The segment covering 328-341 (NTLLSHSSPHHQPS) has biased composition (low complexity). Residues 328-371 (NTLLSHSSPHHQPSTSPPNKLPGVRYNQQGNNEVTSSSTISHHG) are disordered. Residues 353–371 (YNQQGNNEVTSSSTISHHG) show a composition bias toward polar residues.

The protein belongs to the HNF1 homeobox family. As to quaternary structure, binds DNA as a dimer. Can form homodimer or heterodimer with HNF1-alpha. Interacts (via HNF-p1 domain) with PCBD1; the interaction increases its transactivation activity.

It is found in the nucleus. Its function is as follows. Transcription factor that binds to the inverted palindrome 5'-GTTAATNATTAAC-3'. Binds to the FPC element in the cAMP regulatory unit of the PLAU gene. Transcriptional activity is increased by coactivator PCBD1. The chain is Hepatocyte nuclear factor 1-beta (HNF1B) from Sus scrofa (Pig).